Consider the following 264-residue polypeptide: 3-methyl-2-oxobutanoate hydroxymethyltransferase (264 aa).

Mg(2+) contacts are provided by Asp45 and Asp84. Residues 45–46 (DS), Asp84, and Lys112 contribute to the 3-methyl-2-oxobutanoate site. Position 114 (Glu114) interacts with Mg(2+). Glu181 functions as the Proton acceptor in the catalytic mechanism.

It belongs to the PanB family. As to quaternary structure, homodecamer; pentamer of dimers. The cofactor is Mg(2+).

The protein localises to the cytoplasm. It carries out the reaction 3-methyl-2-oxobutanoate + (6R)-5,10-methylene-5,6,7,8-tetrahydrofolate + H2O = 2-dehydropantoate + (6S)-5,6,7,8-tetrahydrofolate. It participates in cofactor biosynthesis; (R)-pantothenate biosynthesis; (R)-pantoate from 3-methyl-2-oxobutanoate: step 1/2. In terms of biological role, catalyzes the reversible reaction in which hydroxymethyl group from 5,10-methylenetetrahydrofolate is transferred onto alpha-ketoisovalerate to form ketopantoate. The chain is 3-methyl-2-oxobutanoate hydroxymethyltransferase from Vibrio atlanticus (strain LGP32) (Vibrio splendidus (strain Mel32)).